Reading from the N-terminus, the 234-residue chain is t-SNARE protein aex-4 (234 aa).

T-SNARE coiled-coil homology domains lie at 37 to 99 (AKLN…ITAM) and 170 to 232 (DAIE…VKKL).

Belongs to the SNAP-25 family. Expressed in intestinal cells.

The protein localises to the cell membrane. Functionally, t-SNARE protein which regulates the secretion of aex-5 from intestinal cells. Involved in the defecation motor program, which is a coordinated series of three muscle contractions that occurs every 45 seconds. This is t-SNARE protein aex-4 from Caenorhabditis elegans.